Here is a 692-residue protein sequence, read N- to C-terminus: Putative ESX-1 scaffolding and assembly protein SaeA (692 aa).

Positions 1-21 are enriched in basic and acidic residues; that stretch reads MGERGELVSDLHPSDDHDADP. Disordered regions lie at residues 1–23 and 87–134; these read MGER…DPRL and PAAP…TTGF. The span at 89–107 shows a compositional bias: pro residues; that stretch reads APEPDPPPVPEPQPEPEPG.

The protein resides in the cytoplasm. Functionally, may be involved in assembly of the ESX-1 / type VII specialized secretion system (T7SS), which exports several proteins including EsxA and EsxB. Involved in DNA conjugation in recipient (MKD8) but not donor (mc(2)155) strain. This is Putative ESX-1 scaffolding and assembly protein SaeA from Mycolicibacterium smegmatis (strain ATCC 700084 / mc(2)155) (Mycobacterium smegmatis).